Here is a 170-residue protein sequence, read N- to C-terminus: Large ribosomal subunit protein bL17 (170 aa).

Belongs to the bacterial ribosomal protein bL17 family. As to quaternary structure, part of the 50S ribosomal subunit. Contacts protein L32.

The protein is Large ribosomal subunit protein bL17 of Azobacteroides pseudotrichonymphae genomovar. CFP2.